The chain runs to 970 residues: Sodium/calcium exchanger 1 (970 aa).

A signal peptide spans 1–32 (MLQLRLLPTFSMGCHLLAVVALLFSHVDLISA). At 33–71 (ETEMEGEGNETGECTGSYYCKKGVILPIWEPQDPSFGDK) the chain is on the extracellular side. N41 carries N-linked (GlcNAc...) asparagine glycosylation. Residues 72-92 (IARATVYFVAMVYMFLGVSII) traverse the membrane as a helical segment. Topologically, residues 93–133 (ADRFMSSIEVITSQEKEITIKKPNGETTKTTVRIWNETVSN) are cytoplasmic. Residues 134–154 (LTLMALGSSAPEILLSVIEVC) traverse the membrane as a helical segment. One copy of the Alpha-1 repeat lies at 138-178 (ALGSSAPEILLSVIEVCGHNFTAGDLGPSTIVGSAAFNMFI). The Extracellular portion of the chain corresponds to 155 to 167 (GHNFTAGDLGPST). Residue N157 is glycosylated (N-linked (GlcNAc...) asparagine). A helical transmembrane segment spans residues 168–188 (IVGSAAFNMFIIIALCVYVVP). Residues 189–201 (DGETRKIKHLRVF) lie on the Cytoplasmic side of the membrane. A helical transmembrane segment spans residues 202–222 (FVTAAWSIFAYTWLYIILSVI). At 223–228 (SPGVVE) the chain is on the extracellular side. Residues 229-249 (VWEGLLTFFFFPICVVFAWVA) form a helical membrane-spanning segment. The Cytoplasmic portion of the chain corresponds to 250–797 (DRRLLFYKYV…FVPPTEYWNG (548 aa)). The tract at residues 251-270 (RRLLFYKYVYKRYRAGKQRG) is putative calmodulin-binding region. 2 positions are modified to phosphoserine: S282 and S389. Calx-beta domains follow at residues 393 to 493 (VNTE…VHLS) and 524 to 624 (ATVT…LEIG). Residues E417, D453, D478, D479, I481, E483, E486, D530, D531, D532, E548, D584, D610, E611, E612, and E715 each contribute to the Ca(2+) site. The chain crosses the membrane as a helical span at residues 798–818 (WACFIVSILMIGILTAFIGDL). Residues 819–821 (ASH) lie on the Extracellular side of the membrane. The chain crosses the membrane as a helical span at residues 822–842 (FGCTIGLKDSVTAVVFVALGT). The Alpha-2 repeat unit spans residues 839–875 (ALGTSVPDTFASKVAATQDQYADASIGNVTGSNAVNV). The Cytoplasmic segment spans residues 843–871 (SVPDTFASKVAATQDQYADASIGNVTGSN). The helical transmembrane segment at 872–892 (AVNVFLGIGVAWSIAAIYHAA) threads the bilayer. At 893 to 903 (NGEQFKVSPGT) the chain is on the extracellular side. The chain crosses the membrane as a helical span at residues 904 to 924 (LAFSVTLFTIFAFINVGVLLY). Residues 925–941 (RRRPEIGGELGGPRTAK) are Cytoplasmic-facing. Residues 942–962 (LLTSCLFVLLWLLYIFFSSLE) form a helical membrane-spanning segment. At 963 to 970 (AYCHIKGF) the chain is on the extracellular side.

It belongs to the Ca(2+):cation antiporter (CaCA) (TC 2.A.19) family. SLC8 subfamily. Cardiac sarcolemma (at protein level).

The protein localises to the cell membrane. It localises to the sarcolemma. It carries out the reaction Ca(2+)(in) + 3 Na(+)(out) = Ca(2+)(out) + 3 Na(+)(in). Its activity is regulated as follows. Activated by micromolar levels of Ca(2+). In the absence of regulatory Ca(2+), channels open rapidly, and then inactivate rapidly. Inactivation is enhanced by Na(+) and is inhibited by micromolar levels of Ca(2+). Its function is as follows. Mediates the exchange of one Ca(2+) ion against three to four Na(+) ions across the cell membrane, and thereby contributes to the regulation of cytoplasmic Ca(2+) levels and Ca(2+)-dependent cellular processes. Contributes to Ca(2+) transport during excitation-contraction coupling in muscle. In a first phase, voltage-gated channels mediate the rapid increase of cytoplasmic Ca(2+) levels due to release of Ca(2+) stores from the endoplasmic reticulum. SLC8A1 mediates the export of Ca(2+) from the cell during the next phase, so that cytoplasmic Ca(2+) levels rapidly return to baseline. Required for normal embryonic heart development and the onset of heart contractions. This chain is Sodium/calcium exchanger 1 (SLC8A1), found in Canis lupus familiaris (Dog).